The chain runs to 159 residues: Major allergen Pyr c 1 (159 aa).

This sequence belongs to the BetVI family.

This Pyrus communis (Pear) protein is Major allergen Pyr c 1 (PYRC1).